Here is a 308-residue protein sequence, read N- to C-terminus: tRNA pseudouridine synthase B (308 aa).

The active-site Nucleophile is Asp44.

This sequence belongs to the pseudouridine synthase TruB family. Type 1 subfamily.

The enzyme catalyses uridine(55) in tRNA = pseudouridine(55) in tRNA. Its function is as follows. Responsible for synthesis of pseudouridine from uracil-55 in the psi GC loop of transfer RNAs. The sequence is that of tRNA pseudouridine synthase B from Nitratidesulfovibrio vulgaris (strain DSM 19637 / Miyazaki F) (Desulfovibrio vulgaris).